The sequence spans 382 residues: Mannitol-1-phosphate 5-dehydrogenase (382 aa).

3-14 lines the NAD(+) pocket; it reads ALHFGAGNIGRG. Position 269 is an N6-acetyllysine (Lys-269).

This sequence belongs to the mannitol dehydrogenase family.

The enzyme catalyses D-mannitol 1-phosphate + NAD(+) = beta-D-fructose 6-phosphate + NADH + H(+). The protein is Mannitol-1-phosphate 5-dehydrogenase of Escherichia coli O139:H28 (strain E24377A / ETEC).